The following is a 289-amino-acid chain: 4-hydroxy-tetrahydrodipicolinate synthase (289 aa).

Threonine 43 contributes to the pyruvate binding site. The active-site Proton donor/acceptor is the tyrosine 131. The Schiff-base intermediate with substrate role is filled by lysine 160. Residue valine 200 participates in pyruvate binding.

The protein belongs to the DapA family. Homotetramer; dimer of dimers.

Its subcellular location is the cytoplasm. It catalyses the reaction L-aspartate 4-semialdehyde + pyruvate = (2S,4S)-4-hydroxy-2,3,4,5-tetrahydrodipicolinate + H2O + H(+). The protein operates within amino-acid biosynthesis; L-lysine biosynthesis via DAP pathway; (S)-tetrahydrodipicolinate from L-aspartate: step 3/4. Its function is as follows. Catalyzes the condensation of (S)-aspartate-beta-semialdehyde [(S)-ASA] and pyruvate to 4-hydroxy-tetrahydrodipicolinate (HTPA). This is 4-hydroxy-tetrahydrodipicolinate synthase from Methanococcus maripaludis (strain C5 / ATCC BAA-1333).